The following is a 364-amino-acid chain: Protein FAM81A (364 aa).

Residues 80-107 (IRNITAIVKQLNRDIEVLQEQIRARDNI) are a coiled coil. Residues 275-300 (ARLDKIEESQRRNAEGQRKPEEEKVH) are compositionally biased toward basic and acidic residues. A disordered region spans residues 275-301 (ARLDKIEESQRRNAEGQRKPEEEKVHG).

The protein belongs to the FAM81 family. Interacts with DLG4/PSD-95, GRIN2B/GLUN2B and SYNGAP1; the interactions facilitate condensate formation. As to expression, highly expressed in brain (at protein level).

The protein localises to the postsynaptic density. It localises to the cytoplasm. Functionally, facilitates the interaction and assembly of proteins within the postsynaptic density by promoting the condensation of postsynaptic proteins via liquid-liquid phase separation. Required for neuronal activity. Accumulation at the postsynaptic density results in enlargement of dendritic spines. The chain is Protein FAM81A from Rattus norvegicus (Rat).